The chain runs to 124 residues: Small ribosomal subunit protein uS13 (124 aa).

The interval 89 to 124 is disordered; it reads GRRHRQGLPVRGQRTKTNARTRKGPKRTVAGKKKAK. The span at 101-124 shows a compositional bias: basic residues; that stretch reads QRTKTNARTRKGPKRTVAGKKKAK.

It belongs to the universal ribosomal protein uS13 family. As to quaternary structure, part of the 30S ribosomal subunit. Forms a loose heterodimer with protein S19. Forms two bridges to the 50S subunit in the 70S ribosome.

Functionally, located at the top of the head of the 30S subunit, it contacts several helices of the 16S rRNA. In the 70S ribosome it contacts the 23S rRNA (bridge B1a) and protein L5 of the 50S subunit (bridge B1b), connecting the 2 subunits; these bridges are implicated in subunit movement. Contacts the tRNAs in the A and P-sites. The polypeptide is Small ribosomal subunit protein uS13 (Nocardioides sp. (strain ATCC BAA-499 / JS614)).